A 159-amino-acid chain; its full sequence is Ribosomal RNA large subunit methyltransferase H (159 aa).

S-adenosyl-L-methionine-binding positions include L76, G108, and 127 to 132 (FGLLTL).

The protein belongs to the RNA methyltransferase RlmH family. Homodimer.

Its subcellular location is the cytoplasm. It catalyses the reaction pseudouridine(1915) in 23S rRNA + S-adenosyl-L-methionine = N(3)-methylpseudouridine(1915) in 23S rRNA + S-adenosyl-L-homocysteine + H(+). Specifically methylates the pseudouridine at position 1915 (m3Psi1915) in 23S rRNA. The protein is Ribosomal RNA large subunit methyltransferase H of Streptococcus pyogenes serotype M5 (strain Manfredo).